The primary structure comprises 603 residues: Thread biopolymer filament subunit gamma (603 aa).

The head stretch occupies residues 1-191 (MASHSSVSYR…ENETMEEELK (191 aa)). Positions 158-476 (VKNILGTLNQ…KLLEGQELMV (319 aa)) constitute an IF rod domain. The tract at residues 193-227 (LTGGVPMSPDSTVNLENVETQVTEMLTEVSNLTLE) is coil 1A. The tract at residues 228–240 (RVRLEIDVDHLRA) is linker 1. The coil 1B stretch occupies residues 241–341 (TADEIKSKYE…DALNVMREEY (101 aa)). Positions 342 to 362 (QQVVTKNVQEAETYCKMQIDQ) are linker 12. The coil 2A stretch occupies residues 363 to 381 (IQGISTQTTEQISILDKEI). The interval 382–389 (NTLEKELQ) is linker 2. The segment at 390 to 510 (PLNVEYQRLL…SSVGYGASST (121 aa)) is coil 2B. The tail stretch occupies residues 511-603 (TLGAISGGYS…GHDSTIILQQ (93 aa)). A compositionally biased stretch (low complexity) spans 562–587 (SSSGGHSMYSSSSMKRSSSKSASASA). Residues 562-603 (SSSGGHSMYSSSSMKRSSSKSASASAGGYGTSGHDSTIILQQ) are disordered.

This sequence belongs to the intermediate filament family. As to quaternary structure, coiled-coil heterodimer of an alpha and a gamma subunit. Assemble into 10 nm filaments. Forms a massive, conical, intermediate filament biopolymer of approximately 60 cm.

It is found in the secreted. The protein resides in the extracellular space. Functionally, released extracellularly into seawater and provides physical and biological defense against invasive organism by modulation of the viscoelastic properties of mucus. This chain is Thread biopolymer filament subunit gamma, found in Eptatretus stoutii (Pacific hagfish).